A 361-amino-acid chain; its full sequence is Adenosine kinase (361 aa).

Positions 7-15 match the Nuclear localization signal motif; it reads PKPKKLKVE. Adenosine is bound at residue D34. S48 is a binding site for Mg(2+). Position 76 is a phosphotyrosine (Y76). N147 serves as a coordination point for Mg(2+). Q305 serves as a coordination point for adenosine. Residue D316 is part of the active site. The active-site Proton acceptor is the D316.

It belongs to the carbohydrate kinase PfkB family. Monomer. It depends on Mg(2+) as a cofactor.

The protein localises to the nucleus. It catalyses the reaction adenosine + ATP = AMP + ADP + H(+). Its pathway is purine metabolism; AMP biosynthesis via salvage pathway; AMP from adenosine: step 1/1. Catalyzes the phosphorylation of the purine nucleoside adenosine at the 5' position in an ATP-dependent manner. Serves as a potential regulator of concentrations of extracellular adenosine and intracellular adenine nucleotides. This is Adenosine kinase (Adk) from Rattus norvegicus (Rat).